A 554-amino-acid polypeptide reads, in one-letter code: ATP synthase subunit alpha (554 aa).

ATP is bound at residue 172 to 179 (GDRKTGKT). A disordered region spans residues 528 to 554 (LDEEELEKESVKVKKPAPEKKAKKEQK). The span at 535 to 554 (KESVKVKKPAPEKKAKKEQK) shows a compositional bias: basic and acidic residues.

The protein belongs to the ATPase alpha/beta chains family. In terms of assembly, F-type ATPases have 2 components, CF(1) - the catalytic core - and CF(0) - the membrane proton channel. CF(1) has five subunits: alpha(3), beta(3), gamma(1), delta(1), epsilon(1). CF(0) has three main subunits: a(1), b(2) and c(9-12). The alpha and beta chains form an alternating ring which encloses part of the gamma chain. CF(1) is attached to CF(0) by a central stalk formed by the gamma and epsilon chains, while a peripheral stalk is formed by the delta and b chains.

It is found in the cell membrane. The enzyme catalyses ATP + H2O + 4 H(+)(in) = ADP + phosphate + 5 H(+)(out). Its function is as follows. Produces ATP from ADP in the presence of a proton gradient across the membrane. The alpha chain is a regulatory subunit. The protein is ATP synthase subunit alpha of Mycolicibacterium paratuberculosis (strain ATCC BAA-968 / K-10) (Mycobacterium paratuberculosis).